Reading from the N-terminus, the 314-residue chain is Homoserine kinase (314 aa).

An ATP-binding site is contributed by 95 to 105; it reads PHSRGLGSSAS.

The protein belongs to the GHMP kinase family. Homoserine kinase subfamily.

Its subcellular location is the cytoplasm. It carries out the reaction L-homoserine + ATP = O-phospho-L-homoserine + ADP + H(+). It functions in the pathway amino-acid biosynthesis; L-threonine biosynthesis; L-threonine from L-aspartate: step 4/5. Its function is as follows. Catalyzes the ATP-dependent phosphorylation of L-homoserine to L-homoserine phosphate. This Rhodococcus erythropolis (strain PR4 / NBRC 100887) protein is Homoserine kinase.